The following is a 184-amino-acid chain: MARLEVPRPATFVTLTGFMGVGKSRIGRELARALMLHFIDLDRYIERRTGISIPDIFRHLGEEAFRRMEKEAVRELVGKDYLVLSLGGGTFMDPESQKALLGRGPVVALWASPETILERAMRKPGERPLLQVENPLERIRTLLEARAPVYRKAHIHVSTDGRRVEEVVEEIVEKLWRHAEARGA.

20-25 is a binding site for ATP; it reads GVGKSR. Ser24 contacts Mg(2+). The substrate site is built by Asp42, Arg66, and Gly88. Arg127 is an ATP binding site. Residue Arg146 participates in substrate binding. An ATP-binding site is contributed by Arg162.

Belongs to the shikimate kinase family. As to quaternary structure, monomer. It depends on Mg(2+) as a cofactor.

It localises to the cytoplasm. The enzyme catalyses shikimate + ATP = 3-phosphoshikimate + ADP + H(+). It functions in the pathway metabolic intermediate biosynthesis; chorismate biosynthesis; chorismate from D-erythrose 4-phosphate and phosphoenolpyruvate: step 5/7. Its function is as follows. Catalyzes the specific phosphorylation of the 3-hydroxyl group of shikimic acid using ATP as a cosubstrate. This chain is Shikimate kinase, found in Thermus thermophilus (strain ATCC 27634 / DSM 579 / HB8).